Here is a 144-residue protein sequence, read N- to C-terminus: Large ribosomal subunit protein uL16 (144 aa).

The protein belongs to the universal ribosomal protein uL16 family. In terms of assembly, part of the 50S ribosomal subunit.

Its function is as follows. Binds 23S rRNA and is also seen to make contacts with the A and possibly P site tRNAs. This is Large ribosomal subunit protein uL16 from Natranaerobius thermophilus (strain ATCC BAA-1301 / DSM 18059 / JW/NM-WN-LF).